The chain runs to 102 residues: MYAIIVTGGKQYKVEAGQAIYVEKLDAQAGDKVTFDKVVFVGGDDTKIGTPFVDGASVEGTVDKQGKEKKVVTFKYKPKKHTHTKQGHRQPYTKVTIDAINA.

Belongs to the bacterial ribosomal protein bL21 family. Part of the 50S ribosomal subunit. Contacts protein L20.

Functionally, this protein binds to 23S rRNA in the presence of protein L20. This chain is Large ribosomal subunit protein bL21, found in Limosilactobacillus fermentum (strain NBRC 3956 / LMG 18251) (Lactobacillus fermentum).